The sequence spans 160 residues: Protein-export protein SecB (160 aa).

The protein belongs to the SecB family. In terms of assembly, homotetramer, a dimer of dimers. One homotetramer interacts with 1 SecA dimer.

It localises to the cytoplasm. In terms of biological role, one of the proteins required for the normal export of preproteins out of the cell cytoplasm. It is a molecular chaperone that binds to a subset of precursor proteins, maintaining them in a translocation-competent state. It also specifically binds to its receptor SecA. The polypeptide is Protein-export protein SecB (Burkholderia lata (strain ATCC 17760 / DSM 23089 / LMG 22485 / NCIMB 9086 / R18194 / 383)).